Here is a 414-residue protein sequence, read N- to C-terminus: Serine hydroxymethyltransferase (414 aa).

Residues Leu-116 and 120-122 (GHL) each bind (6S)-5,6,7,8-tetrahydrofolate. Residue Lys-225 is modified to N6-(pyridoxal phosphate)lysine. 349–351 (SPF) serves as a coordination point for (6S)-5,6,7,8-tetrahydrofolate.

The protein belongs to the SHMT family. Homodimer. The cofactor is pyridoxal 5'-phosphate.

The protein resides in the cytoplasm. It carries out the reaction (6R)-5,10-methylene-5,6,7,8-tetrahydrofolate + glycine + H2O = (6S)-5,6,7,8-tetrahydrofolate + L-serine. It participates in one-carbon metabolism; tetrahydrofolate interconversion. It functions in the pathway amino-acid biosynthesis; glycine biosynthesis; glycine from L-serine: step 1/1. In terms of biological role, catalyzes the reversible interconversion of serine and glycine with tetrahydrofolate (THF) serving as the one-carbon carrier. This reaction serves as the major source of one-carbon groups required for the biosynthesis of purines, thymidylate, methionine, and other important biomolecules. Also exhibits THF-independent aldolase activity toward beta-hydroxyamino acids, producing glycine and aldehydes, via a retro-aldol mechanism. The sequence is that of Serine hydroxymethyltransferase from Oenococcus oeni (strain ATCC BAA-331 / PSU-1).